The sequence spans 260 residues: Neuraminyllactose-binding hemagglutinin (260 aa).

A signal peptide spans 1 to 27 (MKTNGHFKDFAWKKCFLGASVVALLVG). Residue cysteine 28 is the site of N-palmitoyl cysteine attachment. Cysteine 28 carries S-diacylglycerol cysteine lipidation.

It is found in the cell outer membrane. This is Neuraminyllactose-binding hemagglutinin (hpaA) from Helicobacter pylori (strain J99 / ATCC 700824) (Campylobacter pylori J99).